Reading from the N-terminus, the 273-residue chain is Putative pyruvate, phosphate dikinase regulatory protein (273 aa).

An ADP-binding site is contributed by 149-156 (GPSRTSKT).

The protein belongs to the pyruvate, phosphate/water dikinase regulatory protein family. PDRP subfamily.

It catalyses the reaction N(tele)-phospho-L-histidyl/L-threonyl-[pyruvate, phosphate dikinase] + ADP = N(tele)-phospho-L-histidyl/O-phospho-L-threonyl-[pyruvate, phosphate dikinase] + AMP + H(+). The enzyme catalyses N(tele)-phospho-L-histidyl/O-phospho-L-threonyl-[pyruvate, phosphate dikinase] + phosphate + H(+) = N(tele)-phospho-L-histidyl/L-threonyl-[pyruvate, phosphate dikinase] + diphosphate. Functionally, bifunctional serine/threonine kinase and phosphorylase involved in the regulation of the pyruvate, phosphate dikinase (PPDK) by catalyzing its phosphorylation/dephosphorylation. This chain is Putative pyruvate, phosphate dikinase regulatory protein, found in Rickettsia conorii (strain ATCC VR-613 / Malish 7).